The following is a 463-amino-acid chain: 23S rRNA (uracil(1939)-C(5))-methyltransferase RlmD (463 aa).

A TRAM domain is found at 6–76; sequence KSRKPQQPEY…KRLEEAEMVE (71 aa). [4Fe-4S] cluster contacts are provided by cysteine 90, cysteine 96, cysteine 99, and cysteine 178. Glutamine 288, phenylalanine 317, asparagine 322, glutamate 341, aspartate 368, and aspartate 389 together coordinate S-adenosyl-L-methionine. The Nucleophile role is filled by cysteine 415.

This sequence belongs to the class I-like SAM-binding methyltransferase superfamily. RNA M5U methyltransferase family. RlmD subfamily.

The catalysed reaction is uridine(1939) in 23S rRNA + S-adenosyl-L-methionine = 5-methyluridine(1939) in 23S rRNA + S-adenosyl-L-homocysteine + H(+). Functionally, catalyzes the formation of 5-methyl-uridine at position 1939 (m5U1939) in 23S rRNA. This is 23S rRNA (uracil(1939)-C(5))-methyltransferase RlmD from Acinetobacter baumannii (strain AYE).